The primary structure comprises 203 residues: Non-specific lipid transfer protein GPI-anchored 20 (203 aa).

Positions 1–21 (MSKIISLVVAMIAVLALPIRG) are cleaved as a signal peptide. 4 cysteine pairs are disulfide-bonded: cysteine 29–cysteine 74, cysteine 40–cysteine 58, cysteine 59–cysteine 99, and cysteine 72–cysteine 108. N-linked (GlcNAc...) asparagine glycans are attached at residues asparagine 46, asparagine 50, and asparagine 88. The disordered stretch occupies residues 119 to 182 (GPAATFGPSM…TSRPSETPSS (64 aa)). Polar residues-rich tracts occupy residues 144-156 (AAQT…TRPF) and 169-179 (DGGSTSRPSET). Residue serine 172 is the site of GPI-anchor amidated serine attachment. The propeptide at 173-203 (TSRPSETPSSAYALSPSLLFFSIALVALKFY) is removed in mature form.

The protein belongs to the plant LTP family. As to expression, expressed in seedlings, preferentially in hypocotyls and roots. Also observed in siliques and sepals.

Its subcellular location is the cell membrane. In terms of biological role, probable lipid transfer protein. This chain is Non-specific lipid transfer protein GPI-anchored 20, found in Arabidopsis thaliana (Mouse-ear cress).